The chain runs to 577 residues: Probable HECT-type ubiquitin ligase-interacting protein creD (577 aa).

Disordered stretches follow at residues 376-398 (LDPA…GTLS) and 428-566 (NLHA…EEER). Composition is skewed to polar residues over residues 428 to 447 (NLHA…NQLE) and 460 to 472 (SSGS…TSPE). The span at 473–486 (LSRRPSDEVDHDHV) shows a compositional bias: basic and acidic residues. Polar residues predominate over residues 528 to 544 (SPQQAHVRSANRSSSYF).

It belongs to the arrestin family. Interacts with hulA.

In terms of biological role, component of the regulatory network controlling carbon source utilization through ubiquitination and deubiquitination involving creA, creB, creC, creD and acrB. May be involved in signaling by recognizing appropriately phosphorylated substrates via its arrestin domains and then recruit a HECT-type ubiquitin ligase such as hulA, leading to ubiquitination of the substrate, providing a link between ubiquitination and phosphorylation in protein regulation and stability. In Aspergillus terreus (strain NIH 2624 / FGSC A1156), this protein is Probable HECT-type ubiquitin ligase-interacting protein creD (creD).